A 523-amino-acid polypeptide reads, in one-letter code: GMP synthase [glutamine-hydrolyzing] (523 aa).

Residues 9–198 (PVLVVDFGAQ…LTEIAGLEQN (190 aa)) form the Glutamine amidotransferase type-1 domain. The Nucleophile role is filled by C86. Catalysis depends on residues H172 and E174. A GMPS ATP-PPase domain is found at 199–397 (WTAANIAEEL…LGLPEEIVGR (199 aa)). An ATP-binding site is contributed by 227-233 (SGGVDSA).

Homodimer.

It carries out the reaction XMP + L-glutamine + ATP + H2O = GMP + L-glutamate + AMP + diphosphate + 2 H(+). The protein operates within purine metabolism; GMP biosynthesis; GMP from XMP (L-Gln route): step 1/1. Its function is as follows. Catalyzes the synthesis of GMP from XMP. In Corynebacterium glutamicum (strain ATCC 13032 / DSM 20300 / JCM 1318 / BCRC 11384 / CCUG 27702 / LMG 3730 / NBRC 12168 / NCIMB 10025 / NRRL B-2784 / 534), this protein is GMP synthase [glutamine-hydrolyzing].